The sequence spans 138 residues: Superoxide dismutase [Mn] (138 aa).

Residues Gln1, His49, Asp133, and His137 each contribute to the Mn(2+) site.

It belongs to the iron/manganese superoxide dismutase family. It depends on Mn(2+) as a cofactor.

It carries out the reaction 2 superoxide + 2 H(+) = H2O2 + O2. Its function is as follows. Destroys superoxide anion radicals which are normally produced within the cells and which are toxic to biological systems. The chain is Superoxide dismutase [Mn] (sodA) from Mycobacteroides chelonae (Mycobacterium chelonae).